The primary structure comprises 484 residues: Pentatricopeptide repeat-containing protein At1g09190 (484 aa).

PPR repeat units follow at residues 66–100 (NVLV…GIWA), 101–135 (DEYT…GFHR), 136–166 (LGKI…MSER), 167–197 (NVVV…MSER), 198–232 (SIVS…GFDP), 233–267 (DEAT…GLFK), 269–299 (FITV…MQRR), 300–334 (NVVS…GKVA), 336–366 (NEAT…MMER), and 372–406 (RTEH…ANAA). A type E motif region spans residues 407–482 (MWGSLLSACR…STGQSTICDV (76 aa)).

This sequence belongs to the PPR family. PCMP-E subfamily.

In Arabidopsis thaliana (Mouse-ear cress), this protein is Pentatricopeptide repeat-containing protein At1g09190 (PCMP-E70).